Consider the following 122-residue polypeptide: Small ribosomal subunit protein uS12 (122 aa).

A disordered region spans residues 1–45; that stretch reads MPTTNQLVRKERKRQTKKTATPALQGSPQRRGVCTRVSTTTPKKP. A compositionally biased stretch (polar residues) spans 18–28; sequence KTATPALQGSP. Asp-89 is subject to 3-methylthioaspartic acid.

The protein belongs to the universal ribosomal protein uS12 family. In terms of assembly, part of the 30S ribosomal subunit. Contacts proteins S8 and S17. May interact with IF1 in the 30S initiation complex.

In terms of biological role, with S4 and S5 plays an important role in translational accuracy. Interacts with and stabilizes bases of the 16S rRNA that are involved in tRNA selection in the A site and with the mRNA backbone. Located at the interface of the 30S and 50S subunits, it traverses the body of the 30S subunit contacting proteins on the other side and probably holding the rRNA structure together. The combined cluster of proteins S8, S12 and S17 appears to hold together the shoulder and platform of the 30S subunit. The sequence is that of Small ribosomal subunit protein uS12 from Rubrobacter xylanophilus (strain DSM 9941 / JCM 11954 / NBRC 16129 / PRD-1).